Reading from the N-terminus, the 350-residue chain is MFNIASAPFAHNRKQTQTLMLLVILACLPGFLAQSWFFGWGTLIQILLALVTALGSEALVLRLRGRPVKPALLDGSAALTAVLIGLSLPPLLPWWMLVLGTAFAIIIAKHLYGGLGQNLFNPAMVAYVLLLVSFPVQMTSWLPPSSIAAYDIGFGDAASVIFTGFSLDGYSMAQLKQGVDGLTMATPLDTLKTGLTQGLTAGEVMTHTVFEGWGGIGWSWVNLGYLLGGLFLLQQKVINWRIPGAILGSLLLAATLGYLMTPDATATPMFHLFSGATMLGAFFIATDPVSASTTPRGRLVYGVLIGVLVYVIRRFGGYPDAFAFAVLLANLCVPLIDSLTRPKVYGARRK.

5 helical membrane passes run 19 to 39 (LMLL…WFFG), 41 to 61 (GTLI…ALVL), 67 to 87 (PVKP…IGLS), 88 to 108 (LPPL…IIIA), and 122 to 142 (PAMV…TSWL). FMN phosphoryl threonine is present on threonine 186. A run of 4 helical transmembrane segments spans residues 213-233 (WGGI…LFLL), 242-262 (IPGA…LMTP), 264-284 (ATAT…AFFI), and 299-316 (LVYG…RRFG).

The protein belongs to the NqrB/RnfD family. As to quaternary structure, the complex is composed of six subunits: RnfA, RnfB, RnfC, RnfD, RnfE and RnfG. The cofactor is FMN.

It is found in the cell inner membrane. In terms of biological role, part of a membrane-bound complex that couples electron transfer with translocation of ions across the membrane. The chain is Ion-translocating oxidoreductase complex subunit D from Aeromonas hydrophila subsp. hydrophila (strain ATCC 7966 / DSM 30187 / BCRC 13018 / CCUG 14551 / JCM 1027 / KCTC 2358 / NCIMB 9240 / NCTC 8049).